The primary structure comprises 196 residues: RNA pyrophosphohydrolase (196 aa).

The region spanning 6 to 149 (GYRPNVGIVI…KRDVYRKVMK (144 aa)) is the Nudix hydrolase domain. A Nudix box motif is present at residues 38 to 59 (GGINDNESAEQAMYRELHEEVG). Positions 166–196 (SREANSQSNSANKKYSQTKYTKRHFYKSKGQ) are disordered. Over residues 167-184 (REANSQSNSANKKYSQTK) the composition is skewed to polar residues. Residues 185-196 (YTKRHFYKSKGQ) show a composition bias toward basic residues.

This sequence belongs to the Nudix hydrolase family. RppH subfamily. Requires a divalent metal cation as cofactor.

Its function is as follows. Accelerates the degradation of transcripts by removing pyrophosphate from the 5'-end of triphosphorylated RNA, leading to a more labile monophosphorylated state that can stimulate subsequent ribonuclease cleavage. This chain is RNA pyrophosphohydrolase, found in Haemophilus influenzae (strain 86-028NP).